A 42-amino-acid chain; its full sequence is Photosystem I reaction center subunit IX (42 aa).

The chain crosses the membrane as a helical span at residues 7–27 (FLSLGPVLLVLWLSVQATLLI).

Belongs to the PsaJ family.

The protein resides in the cellular thylakoid membrane. Functionally, may help in the organization of the PsaE and PsaF subunits. The polypeptide is Photosystem I reaction center subunit IX (Gloeothece citriformis (strain PCC 7424) (Cyanothece sp. (strain PCC 7424))).